Here is a 446-residue protein sequence, read N- to C-terminus: Na(+)-translocating NADH-quinone reductase subunit A (446 aa).

The protein belongs to the NqrA family. Composed of six subunits; NqrA, NqrB, NqrC, NqrD, NqrE and NqrF.

It carries out the reaction a ubiquinone + n Na(+)(in) + NADH + H(+) = a ubiquinol + n Na(+)(out) + NAD(+). In terms of biological role, NQR complex catalyzes the reduction of ubiquinone-1 to ubiquinol by two successive reactions, coupled with the transport of Na(+) ions from the cytoplasm to the periplasm. NqrA to NqrE are probably involved in the second step, the conversion of ubisemiquinone to ubiquinol. This chain is Na(+)-translocating NADH-quinone reductase subunit A, found in Psychromonas ingrahamii (strain DSM 17664 / CCUG 51855 / 37).